A 397-amino-acid chain; its full sequence is Acetate kinase (397 aa).

N7 provides a ligand contact to Mg(2+). K14 contacts ATP. R91 serves as a coordination point for substrate. D147 serves as the catalytic Proton donor/acceptor. ATP-binding positions include 207–211, 282–284, and 330–334; these read HLGNG, DFR, and GLGEN. A Mg(2+)-binding site is contributed by E383.

This sequence belongs to the acetokinase family. Homodimer. It depends on Mg(2+) as a cofactor. Requires Mn(2+) as cofactor.

It localises to the cytoplasm. It carries out the reaction acetate + ATP = acetyl phosphate + ADP. It participates in metabolic intermediate biosynthesis; acetyl-CoA biosynthesis; acetyl-CoA from acetate: step 1/2. Catalyzes the formation of acetyl phosphate from acetate and ATP. Can also catalyze the reverse reaction. This chain is Acetate kinase, found in Moorella thermoacetica (strain ATCC 39073 / JCM 9320).